We begin with the raw amino-acid sequence, 84 residues long: Keratin-associated protein 19-4 (84 aa).

It belongs to the KRTAP type 19 family. Interacts with hair keratins.

Its function is as follows. In the hair cortex, hair keratin intermediate filaments are embedded in an interfilamentous matrix, consisting of hair keratin-associated proteins (KRTAP), which are essential for the formation of a rigid and resistant hair shaft through their extensive disulfide bond cross-linking with abundant cysteine residues of hair keratins. The matrix proteins include the high-sulfur and high-glycine-tyrosine keratins. This is Keratin-associated protein 19-4 (KRTAP19-4) from Homo sapiens (Human).